The following is a 232-amino-acid chain: Putative homeobox protein NANOG2 (232 aa).

Residues 1-10 (MDLPIEDSHD) are compositionally biased toward basic and acidic residues. The interval 1-39 (MDLPIEDSHDSSTSPKGKQPTTAEKSATKKEDKVPVKKQ) is disordered. Residues 11–25 (SSTSPKGKQPTTAEK) are compositionally biased toward polar residues. The segment covering 26-35 (SATKKEDKVP) has biased composition (basic and acidic residues). Tandem repeats lie at residues 123 to 127 (WSNQT), 128 to 132 (WNNSI), 133 to 137 (WSNET), 143 to 147 (WSNHS), 148 to 152 (WNTQT), 153 to 157 (WCTQS), 158 to 162 (WNNQA), and 163 to 167 (WNSPF). Residues 123–167 (WSNQTWNNSIWSNETQNIQSWSNHSWNTQTWCTQSWNNQAWNSPF) form an 8 X repeats starting with a Trp in each unit region. The interval 123-167 (WSNQTWNNSIWSNETQNIQSWSNHSWNTQTWCTQSWNNQAWNSPF) is sufficient for transactivation activity. The tract at residues 168–232 (YNCGEESLQS…YSTNMQPEDV (65 aa)) is sufficient for strong transactivation activity.

The protein belongs to the Nanog homeobox family.

It is found in the nucleus. Probable transcriptional regulator. The protein is Putative homeobox protein NANOG2 (NANOGP1) of Pan troglodytes (Chimpanzee).